Here is a 141-residue protein sequence, read N- to C-terminus: ATP synthase epsilon chain (141 aa).

Belongs to the ATPase epsilon chain family. In terms of assembly, F-type ATPases have 2 components, CF(1) - the catalytic core - and CF(0) - the membrane proton channel. CF(1) has five subunits: alpha(3), beta(3), gamma(1), delta(1), epsilon(1). CF(0) has three main subunits: a, b and c.

It is found in the cell inner membrane. Functionally, produces ATP from ADP in the presence of a proton gradient across the membrane. This chain is ATP synthase epsilon chain, found in Burkholderia ambifaria (strain ATCC BAA-244 / DSM 16087 / CCUG 44356 / LMG 19182 / AMMD) (Burkholderia cepacia (strain AMMD)).